A 574-amino-acid chain; its full sequence is Putative DNA-directed RNA polymerase subunit alpha-like 1 (574 aa).

Positions 1-352 (MTNNKNFADW…ELFSLFLQTS (352 aa)) are alpha N-terminal domain (alpha-NTD). Residues 419-574 (PDYDRYNSIT…RERKRGNREF (156 aa)) form an alpha C-terminal domain (alpha-CTD) region. The segment at 534-574 (QETLRKEQDEQSSQQQKDQMEKRRWERQNRERERKRGNREF) is disordered. Basic and acidic residues predominate over residues 551–574 (DQMEKRRWERQNRERERKRGNREF).

The protein belongs to the RNA polymerase alpha chain family. As to quaternary structure, in plastids the minimal PEP RNA polymerase catalytic core is composed of four subunits: alpha, beta, beta', and beta''. When a (nuclear-encoded) sigma factor is associated with the core the holoenzyme is formed, which can initiate transcription.

Its subcellular location is the plastid. It is found in the chloroplast. It carries out the reaction RNA(n) + a ribonucleoside 5'-triphosphate = RNA(n+1) + diphosphate. In terms of biological role, DNA-dependent RNA polymerase catalyzes the transcription of DNA into RNA using the four ribonucleoside triphosphates as substrates. The polypeptide is Putative DNA-directed RNA polymerase subunit alpha-like 1 (rpoAL1-A) (Pelargonium hortorum (Common geranium)).